Reading from the N-terminus, the 276-residue chain is Large ribosomal subunit protein uL2 (276 aa).

Disordered regions lie at residues 26–45 (RSTPERSLTEGLTKKSGRNC) and 224–276 (AMNP…RGQK). The segment covering 259–276 (RDKKKASSKLIIKRRGQK) has biased composition (basic residues).

It belongs to the universal ribosomal protein uL2 family. As to quaternary structure, part of the 50S ribosomal subunit. Forms a bridge to the 30S subunit in the 70S ribosome.

Its function is as follows. One of the primary rRNA binding proteins. Required for association of the 30S and 50S subunits to form the 70S ribosome, for tRNA binding and peptide bond formation. It has been suggested to have peptidyltransferase activity; this is somewhat controversial. Makes several contacts with the 16S rRNA in the 70S ribosome. The chain is Large ribosomal subunit protein uL2 from Oleidesulfovibrio alaskensis (strain ATCC BAA-1058 / DSM 17464 / G20) (Desulfovibrio alaskensis).